Consider the following 342-residue polypeptide: Protease HtpX homolog (342 aa).

2 helical membrane passes run 6–26 (TAML…LIGG) and 28–48 (GGMM…YWNS). Histidine 130 is a Zn(2+) binding site. Glutamate 131 is a catalytic residue. Histidine 134 is a binding site for Zn(2+). The next 2 helical transmembrane spans lie at 145–165 (ITAT…FFGG) and 173–193 (GGGI…AMLV). Position 202 (glutamate 202) interacts with Zn(2+). The disordered stretch occupies residues 290–342 (PQHSKPAASGPWGSSAERSTDDPWGVKGGASTRSVPKIGRRGKDNDAPKGPWN).

This sequence belongs to the peptidase M48B family. It depends on Zn(2+) as a cofactor.

It is found in the cell inner membrane. The protein is Protease HtpX homolog of Allorhizobium ampelinum (strain ATCC BAA-846 / DSM 112012 / S4) (Agrobacterium vitis (strain S4)).